A 521-amino-acid polypeptide reads, in one-letter code: Ribonuclease Y (521 aa).

Residues 5-25 form a helical membrane-spanning segment; that stretch reads MMTMILAVIAAAIGFLIGNLL. A KH domain is found at 211-271; the sequence is TVSVVALPSD…VRREVAKLSL (61 aa). The 94-residue stretch at 337 to 430 folds into the HD domain; that stretch reads VYQHSLEVAF…VQAADALSGA (94 aa).

This sequence belongs to the RNase Y family.

It localises to the cell membrane. Its function is as follows. Endoribonuclease that initiates mRNA decay. This Geotalea uraniireducens (strain Rf4) (Geobacter uraniireducens) protein is Ribonuclease Y.